The primary structure comprises 205 residues: Phosphoserine phosphatase ThrH (205 aa).

Asp7 serves as the catalytic Nucleophile. Residues Asp7 and Glu9 each coordinate Mg(2+). Glu9 (proton donor) is an active-site residue. Residues Glu15, Arg46, 90 to 91 (SD), and Lys133 each bind substrate. A Mg(2+)-binding site is contributed by Asp152. Asn155 lines the substrate pocket.

This sequence belongs to the thrH family. Mg(2+) serves as cofactor.

It catalyses the reaction O-phospho-L-serine + H2O = L-serine + phosphate. The catalysed reaction is O-phospho-D-serine + H2O = D-serine + phosphate. It participates in amino-acid biosynthesis; L-serine biosynthesis; L-serine from 3-phospho-D-glycerate: step 3/3. Functionally, phosphoserine phosphatase that mediates dephosphorylation of phosphoserine in the serine biosynthesis pathway. Also able to dephosphorylate other substrates such as phospho-L(or D)-threonine, with lower activity. Shows phosphoserine:homoserine phosphotransferase activity by transferring the phosphoryl group to homoserine using phosphoserine as the phosphoryl group donor. The sequence is that of Phosphoserine phosphatase ThrH (thrH) from Pseudomonas aeruginosa (strain ATCC 15692 / DSM 22644 / CIP 104116 / JCM 14847 / LMG 12228 / 1C / PRS 101 / PAO1).